A 279-amino-acid polypeptide reads, in one-letter code: Oxygen-dependent coproporphyrinogen-III oxidase (279 aa).

Ser102 lines the substrate pocket. A divalent metal cation is bound by residues His106 and His116. His116 serves as the catalytic Proton donor. Position 118-120 (118-120 (NTR)) interacts with substrate. Residues His149 and His179 each contribute to the a divalent metal cation site. The segment at 244–279 (YVEFNLLYDRGTKFGLMTDGNIEAILMSLPPVVKFN) is important for dimerization.

The protein belongs to the aerobic coproporphyrinogen-III oxidase family. In terms of assembly, homodimer. It depends on a divalent metal cation as a cofactor.

The protein resides in the cytoplasm. It carries out the reaction coproporphyrinogen III + O2 + 2 H(+) = protoporphyrinogen IX + 2 CO2 + 2 H2O. It functions in the pathway porphyrin-containing compound metabolism; protoporphyrin-IX biosynthesis; protoporphyrinogen-IX from coproporphyrinogen-III (O2 route): step 1/1. Functionally, involved in the heme biosynthesis. Catalyzes the aerobic oxidative decarboxylation of propionate groups of rings A and B of coproporphyrinogen-III to yield the vinyl groups in protoporphyrinogen-IX. This Rickettsia typhi (strain ATCC VR-144 / Wilmington) protein is Oxygen-dependent coproporphyrinogen-III oxidase.